The following is a 436-amino-acid chain: Phosphomethylpyrimidine synthase (436 aa).

Residues Asn-68, Met-97, Tyr-126, His-166, 188 to 190 (SRG), 229 to 232 (DGFR), and Glu-268 contribute to the substrate site. Position 272 (His-272) interacts with Zn(2+). Substrate is bound at residue Tyr-295. Zn(2+) is bound at residue His-336. Positions 412, 415, and 419 each coordinate [4Fe-4S] cluster.

Belongs to the ThiC family. As to quaternary structure, homodimer. [4Fe-4S] cluster is required as a cofactor.

The enzyme catalyses 5-amino-1-(5-phospho-beta-D-ribosyl)imidazole + S-adenosyl-L-methionine = 4-amino-2-methyl-5-(phosphooxymethyl)pyrimidine + CO + 5'-deoxyadenosine + formate + L-methionine + 3 H(+). Its pathway is cofactor biosynthesis; thiamine diphosphate biosynthesis. Its function is as follows. Catalyzes the synthesis of the hydroxymethylpyrimidine phosphate (HMP-P) moiety of thiamine from aminoimidazole ribotide (AIR) in a radical S-adenosyl-L-methionine (SAM)-dependent reaction. This Geobacter metallireducens (strain ATCC 53774 / DSM 7210 / GS-15) protein is Phosphomethylpyrimidine synthase.